A 471-amino-acid chain; its full sequence is Cysteine--tRNA ligase (471 aa).

Zn(2+) is bound at residue cysteine 29. The short motif at 31–41 is the 'HIGH' region element; the sequence is PTVYNYIHIGN. Cysteine 209, histidine 234, and glutamate 238 together coordinate Zn(2+). Positions 266 to 270 match the 'KMSKS' region motif; it reads KMSKS. Lysine 269 serves as a coordination point for ATP.

This sequence belongs to the class-I aminoacyl-tRNA synthetase family. Monomer. Zn(2+) serves as cofactor.

It is found in the cytoplasm. The enzyme catalyses tRNA(Cys) + L-cysteine + ATP = L-cysteinyl-tRNA(Cys) + AMP + diphosphate. The chain is Cysteine--tRNA ligase from Listeria innocua serovar 6a (strain ATCC BAA-680 / CLIP 11262).